A 417-amino-acid chain; its full sequence is Serine hydroxymethyltransferase (417 aa).

Residues leucine 121 and glycine 125–leucine 127 contribute to the (6S)-5,6,7,8-tetrahydrofolate site. Position 229 is an N6-(pyridoxal phosphate)lysine (lysine 229). Serine 355–phenylalanine 357 contacts (6S)-5,6,7,8-tetrahydrofolate.

It belongs to the SHMT family. As to quaternary structure, homodimer. It depends on pyridoxal 5'-phosphate as a cofactor.

It localises to the cytoplasm. The catalysed reaction is (6R)-5,10-methylene-5,6,7,8-tetrahydrofolate + glycine + H2O = (6S)-5,6,7,8-tetrahydrofolate + L-serine. The protein operates within one-carbon metabolism; tetrahydrofolate interconversion. It functions in the pathway amino-acid biosynthesis; glycine biosynthesis; glycine from L-serine: step 1/1. Functionally, catalyzes the reversible interconversion of serine and glycine with tetrahydrofolate (THF) serving as the one-carbon carrier. This reaction serves as the major source of one-carbon groups required for the biosynthesis of purines, thymidylate, methionine, and other important biomolecules. Also exhibits THF-independent aldolase activity toward beta-hydroxyamino acids, producing glycine and aldehydes, via a retro-aldol mechanism. This chain is Serine hydroxymethyltransferase, found in Edwardsiella ictaluri (strain 93-146).